The following is a 169-amino-acid chain: Podoplanin (169 aa).

The N-terminal stretch at 1 to 22 (MWRVPVLLLVLGGAGLRVPAAG) is a signal peptide. The Extracellular portion of the chain corresponds to 23-138 (ASTVRPDDII…EKDGLATVTL (116 aa)). The O-linked (GalNAc...) threonine glycan is linked to threonine 25. The tract at residues 37–69 (DSVVTPGTEDSVVTPGAEDNVVTDGATEEPYES) is disordered. Residue serine 38 is glycosylated (O-linked (GalNAc...) serine). 2 O-linked (GalNAc...) threonine glycosylation sites follow: threonine 41 and threonine 44. Serine 47 carries O-linked (GalNAc...) serine glycosylation. Residues threonine 50, threonine 59, threonine 63, threonine 72, threonine 76, threonine 79, threonine 83, threonine 92, threonine 96, threonine 106, threonine 107, threonine 108, threonine 113, threonine 126, and threonine 127 are each glycosylated (O-linked (GalNAc...) threonine). A helical membrane pass occupies residues 139 to 159 (VGIIVGVLLAIGFIGGIIIVV). Residues 140 to 144 (GIIVG) form a requires for dimerization and lipid rafts association region. The Cytoplasmic segment spans residues 160-169 (ARKMSGRYSP). The segment at 161 to 162 (RK) is requires for interaction with MSN and EZR.

It belongs to the podoplanin family. Homodimer. Interacts with CLEC1B; the interaction is independent of CLEC1B glycosylation and activates CLEC1B; the interaction is dependent of sialic acid on O-glycans. Interacts with CD9; this interaction is homophilic and attenuates platelet aggregation and pulmonary metastasis induced by PDPN. Interacts with LGALS8; the interaction is glycosylation-dependent; may participate in connection of the lymphatic endothelium to the surrounding extracellular matrix. Interacts with HSPA9. Interacts (via extracellular domain) with CD44; this interaction is required for PDPN-mediated directional migration and regulation of lamellipodia extension/stabilization during cell spreading and migration. Interacts (via cytoplasmic domain) with MSN and EZR; activates RHOA and promotes epithelial-mesenchymal transition. Interacts with CCL21; relocalized PDPN to the basolateral membrane. In terms of processing, extensively O-glycosylated. Contains sialic acid residues. O-glycosylation is necessary for platelet aggregation activity. Disialylated at Thr-59; sialic acid is critical for platelet-aggregating activity and for CLEC1B interaction. The N-terminus is blocked.

The protein localises to the membrane. It is found in the cell projection. It localises to the filopodium membrane. Its subcellular location is the lamellipodium membrane. The protein resides in the microvillus membrane. The protein localises to the ruffle membrane. It is found in the membrane raft. It localises to the apical cell membrane. Its subcellular location is the basolateral cell membrane. The protein resides in the invadopodium. Its function is as follows. Mediates effects on cell migration and adhesion through its different partners. During development plays a role in blood and lymphatic vessels separation by binding CLEC1B, triggering CLEC1B activation in platelets and leading to platelet activation and/or aggregation. Interaction with CD9, on the contrary, attenuates platelet aggregation and pulmonary metastasis induced by PDPN. Mediates effects on cell migration and adhesion through its different partners. Through MSN or EZR interaction promotes epithelial-mesenchymal transition (EMT) leading to ERZ phosphorylation and triggering RHOA activation leading to cell migration increase and invasiveness. Interaction with CD44 promotes directional cell migration in epithelial and tumor cells. In lymph nodes (LNs), controls fibroblastic reticular cells (FRCs) adhesion to the extracellular matrix (ECM) and contraction of the actomyosin by maintaining ERM proteins (EZR; MSN and RDX) and MYL9 activation through association with unknown transmembrane proteins. Engagement of CLEC1B by PDPN promotes FRCs relaxation by blocking lateral membrane interactions leading to reduction of ERM proteins (EZR; MSN and RDX) and MYL9 activation. Through binding with LGALS8 may participate in connection of the lymphatic endothelium to the surrounding extracellular matrix. In keratinocytes, induces changes in cell morphology showing an elongated shape, numerous membrane protrusions, major reorganization of the actin cytoskeleton, increased motility and decreased cell adhesion. Controls invadopodia stability and maturation leading to efficient degradation of the extracellular matrix (ECM) in tumor cells through modulation of RHOC activity in order to activate ROCK1/ROCK2 and LIMK1/LIMK2 and inactivation of CFL1. Required for normal lung cell proliferation and alveolus formation at birth. Does not function as a water channel or as a regulator of aquaporin-type water channels. Does not have any effect on folic acid or amino acid transport. In Canis lupus familiaris (Dog), this protein is Podoplanin (PDPN).